The sequence spans 257 residues: MALPDFTMHQLLEAGVHFGHQTHRWNPKMIRYIYGQRNNIHIIDLAQTVPLLHQALKLVSDTVARGGRILFVGTKRQASDIIADAANRSAQYYVNARWLGGMLTNWKTISNSIHRLRKLDKILATETQGFTKKERLNLERDREKLNRALGGIKDMGSVPDLIFIIDTNKENIAIQEAKRLGIPVIAIIDTNCNPDNVDHPIPGNDDASRAISLYCDLFARAALDGIARQQGAMGIDLGAQADAPVKPILENTIPVSE.

The protein belongs to the universal ribosomal protein uS2 family.

The chain is Small ribosomal subunit protein uS2 from Bartonella quintana (strain Toulouse) (Rochalimaea quintana).